Consider the following 193-residue polypeptide: 3-isopropylmalate dehydratase small subunit (193 aa).

It belongs to the LeuD family. LeuD type 1 subfamily. As to quaternary structure, heterodimer of LeuC and LeuD.

It carries out the reaction (2R,3S)-3-isopropylmalate = (2S)-2-isopropylmalate. It participates in amino-acid biosynthesis; L-leucine biosynthesis; L-leucine from 3-methyl-2-oxobutanoate: step 2/4. Functionally, catalyzes the isomerization between 2-isopropylmalate and 3-isopropylmalate, via the formation of 2-isopropylmaleate. The protein is 3-isopropylmalate dehydratase small subunit of Listeria monocytogenes serovar 1/2a (strain ATCC BAA-679 / EGD-e).